Reading from the N-terminus, the 249-residue chain is 5'-nucleotidase SurE (249 aa).

A divalent metal cation-binding residues include aspartate 9, aspartate 10, serine 40, and asparagine 92.

The protein belongs to the SurE nucleotidase family. The cofactor is a divalent metal cation.

The protein localises to the cytoplasm. The enzyme catalyses a ribonucleoside 5'-phosphate + H2O = a ribonucleoside + phosphate. Its function is as follows. Nucleotidase that shows phosphatase activity on nucleoside 5'-monophosphates. This is 5'-nucleotidase SurE from Shewanella baltica (strain OS223).